Here is a 491-residue protein sequence, read N- to C-terminus: UDP-N-acetylmuramate--L-alanine ligase (491 aa).

ATP is bound at residue glycine 126–threonine 132.

Belongs to the MurCDEF family.

It is found in the cytoplasm. The catalysed reaction is UDP-N-acetyl-alpha-D-muramate + L-alanine + ATP = UDP-N-acetyl-alpha-D-muramoyl-L-alanine + ADP + phosphate + H(+). The protein operates within cell wall biogenesis; peptidoglycan biosynthesis. Cell wall formation. In Shigella flexneri serotype 5b (strain 8401), this protein is UDP-N-acetylmuramate--L-alanine ligase.